A 143-amino-acid chain; its full sequence is 18.1 kDa class I heat shock protein (143 aa).

The sHSP domain occupies 29–143; it reads ENSAFVSTRI…PEVKSIEISS (115 aa).

This sequence belongs to the small heat shock protein (HSP20) family. Forms oligomeric structures.

The protein resides in the cytoplasm. This Medicago sativa (Alfalfa) protein is 18.1 kDa class I heat shock protein (HSP18.1).